A 247-amino-acid chain; its full sequence is 5-oxoprolinase subunit A (247 aa).

This sequence belongs to the LamB/PxpA family. Forms a complex composed of PxpA, PxpB and PxpC.

The enzyme catalyses 5-oxo-L-proline + ATP + 2 H2O = L-glutamate + ADP + phosphate + H(+). Functionally, catalyzes the cleavage of 5-oxoproline to form L-glutamate coupled to the hydrolysis of ATP to ADP and inorganic phosphate. The chain is 5-oxoprolinase subunit A from Ralstonia pickettii (strain 12J).